The sequence spans 170 residues: MAADDHFSLFGLPARFDIDAQALERAWRAVAAQVHPDRYATASPAERRVAMQWSARANEAYRQLRDPLLRARYLCEQAGVDLQTESNTAMDPAFLMQQMQWREMLDEARDDAAVFAELDAELSDARRQMRETLATLLDERHDYAAAGQKVREWMFVEKLAQELAAARPAG.

In terms of domain architecture, J spans 5–79 (DHFSLFGLPA…RARYLCEQAG (75 aa)).

Belongs to the HscB family. As to quaternary structure, interacts with HscA and stimulates its ATPase activity.

Co-chaperone involved in the maturation of iron-sulfur cluster-containing proteins. Seems to help targeting proteins to be folded toward HscA. This is Co-chaperone protein HscB homolog from Bordetella petrii (strain ATCC BAA-461 / DSM 12804 / CCUG 43448).